Consider the following 637-residue polypeptide: Chaperone protein HtpG (637 aa).

The tract at residues 1 to 338 is a; substrate-binding; the sequence is MMELKMHNVK…SPDLPLNISR (338 aa). Residues 339 to 558 form a b region; it reads ETLQNNRVVE…EGAMDLRMER (220 aa). A disordered region spans residues 493-512; sequence KFSPEEKDKENKSDEERAEG. The tract at residues 559-637 is c; sequence FLREQNQLNY…LNNLLGKVII (79 aa).

This sequence belongs to the heat shock protein 90 family. As to quaternary structure, homodimer.

It localises to the cytoplasm. Functionally, molecular chaperone. Has ATPase activity. The sequence is that of Chaperone protein HtpG from Wolbachia sp. subsp. Brugia malayi (strain TRS).